A 262-amino-acid polypeptide reads, in one-letter code: MSERESWHKEIDLFLVAMGYFTRIPMPKWVEVDSDKLNKASRYFGLVGLLVGLLSAIVFWLTQNWLPAGVSVLLAMLVGVLLTGGFHEDGLADTFDGFGGGWTAEDKLRIMKDSRLGSYGALALILALLLKWQLLVELALYDPVVAGSALIVAHTVSRVVSASIIFSEKYVRDDETSKSKPLSQHQGINELLILIASGVLVLLFLKGLAALSLLLVMIGLRRLIIVIFRRQIGGYTGDTLGAAQQIAEIVCYFVLLVVGNIL.

A run of 6 helical transmembrane segments spans residues 43-63 (YFGL…WLTQ), 66-86 (LPAG…TGGF), 120-140 (GALA…ELAL), 146-166 (AGSA…SIIF), 191-211 (LLIL…LAAL), and 242-262 (AAQQ…GNIL).

It belongs to the CobS family. It depends on Mg(2+) as a cofactor.

The protein resides in the cell inner membrane. It catalyses the reaction alpha-ribazole + adenosylcob(III)inamide-GDP = adenosylcob(III)alamin + GMP + H(+). The enzyme catalyses alpha-ribazole 5'-phosphate + adenosylcob(III)inamide-GDP = adenosylcob(III)alamin 5'-phosphate + GMP + H(+). It participates in cofactor biosynthesis; adenosylcobalamin biosynthesis; adenosylcobalamin from cob(II)yrinate a,c-diamide: step 7/7. In terms of biological role, joins adenosylcobinamide-GDP and alpha-ribazole to generate adenosylcobalamin (Ado-cobalamin). Also synthesizes adenosylcobalamin 5'-phosphate from adenosylcobinamide-GDP and alpha-ribazole 5'-phosphate. This Shewanella baltica (strain OS185) protein is Adenosylcobinamide-GDP ribazoletransferase.